The chain runs to 553 residues: Efflux pump alnA (553 aa).

Residues 1-21 are compositionally biased toward basic and acidic residues; sequence MSSDDTVKQEHSCSADSEKQD. Residues 1 to 36 are disordered; the sequence is MSSDDTVKQEHSCSADSEKQDSSCASDNEQPKEPQS. The next 13 helical transmembrane spans lie at 40 to 60, 85 to 105, 110 to 130, 136 to 156, 174 to 194, 202 to 222, 243 to 263, 270 to 290, 319 to 339, 355 to 375, 382 to 402, 413 to 433, and 522 to 542; these read IHGL…FLFA, WSGV…LQIF, IKWM…ICGA, MLIG…VGVM, AMGL…GAFT, WSFY…IFLL, LVGT…INFA, SEPG…VFGI, LLFV…YVIP, VRLL…GYLA, IPWY…MYTI, GYSS…HAVA, and TYIL…GMKW.

It belongs to the major facilitator superfamily. TCR/Tet family.

It is found in the cell membrane. Efflux pump; part of the gene cluster that mediates the biosynthesis of asperlin, a polyketide showing anti-inflammatory, antitumor and antibiotic activities. Is probably involved in the efflux of asperlin. The protein is Efflux pump alnA of Emericella nidulans (strain FGSC A4 / ATCC 38163 / CBS 112.46 / NRRL 194 / M139) (Aspergillus nidulans).